Consider the following 767-residue polypeptide: Start control protein cdc10 (767 aa).

The interval 17-44 is disordered; that stretch reads FSYQKRPEDEPSQPLSNRNINKLNDSST. Residues 29 to 44 are compositionally biased toward polar residues; that stretch reads QPLSNRNINKLNDSST. One can recognise an HTH APSES-type domain in the interval 66–173; sequence ELYAVECSGM…FNLDLFPKFS (108 aa). The segment at residues 98-119 is a DNA-binding region (H-T-H motif); sequence ISQILRLAGTSSSENAKELDDI. The segment at 189 to 230 is disordered; it reads TSSFNTRSPLRNHNFSNPSKSSKNGVHTINNMQSSPSPSSSF. The span at 192-221 shows a compositional bias: polar residues; that stretch reads FNTRSPLRNHNFSNPSKSSKNGVHTINNMQ. Phosphoserine is present on Ser-252. A Nuclear localization signal motif is present at residues 261 to 264; the sequence is KRHR. 2 ANK repeats span residues 356–385 and 483–512; these read LGHA…NPLR and NGDT…SAYI. Residues 542-562 are disordered; that stretch reads VSLMSENLSSKEKTAVPPRQK.

DSC1 contains cdc10 and sct1/res1. Interacts with pol5.

The protein localises to the nucleus. Functionally, major component of the cell cycle transcription factor complex MBF (MCB binding factor, also known as DSC1), that controls G1-S phase specific gene expression. Involved in the control of rRNA production, via interaction with pol5. May be involved in the transcriptional regulation of the cdc22 and cdt1 genes. In fission yeast, two genes, cdc10 and cdc2, are required for the cell cycle control called start, the point early in the G1 phase at which cells become committed to the mitotic cycle. This Schizosaccharomyces pombe (strain 972 / ATCC 24843) (Fission yeast) protein is Start control protein cdc10 (cdc10).